The primary structure comprises 333 residues: Flap endonuclease 1 (333 aa).

The interval 1–99 is N-domain; the sequence is MGVALREVLT…ETIESRREVR (99 aa). The Mg(2+) site is built by aspartate 28, aspartate 81, glutamate 153, glutamate 155, aspartate 174, aspartate 176, and aspartate 235. Positions 117-256 are I-domain; sequence EAYKQARASS…TALKIVKKDG (140 aa). An interaction with PCNA region spans residues 325–333; the sequence is GQKTLDRWF.

Belongs to the XPG/RAD2 endonuclease family. FEN1 subfamily. As to quaternary structure, interacts with PCNA. PCNA stimulates the nuclease activity without altering cleavage specificity. Requires Mg(2+) as cofactor.

Functionally, structure-specific nuclease with 5'-flap endonuclease and 5'-3' exonuclease activities involved in DNA replication and repair. During DNA replication, cleaves the 5'-overhanging flap structure that is generated by displacement synthesis when DNA polymerase encounters the 5'-end of a downstream Okazaki fragment. Binds the unpaired 3'-DNA end and kinks the DNA to facilitate 5' cleavage specificity. Cleaves one nucleotide into the double-stranded DNA from the junction in flap DNA, leaving a nick for ligation. Also involved in the base excision repair (BER) pathway. Acts as a genome stabilization factor that prevents flaps from equilibrating into structures that lead to duplications and deletions. Also possesses 5'-3' exonuclease activity on nicked or gapped double-stranded DNA. The protein is Flap endonuclease 1 of Methanosphaerula palustris (strain ATCC BAA-1556 / DSM 19958 / E1-9c).